The following is a 353-amino-acid chain: A-kinase anchor protein 7 isoforms delta and gamma (353 aa).

Basic and acidic residues-rich tracts occupy residues 1 to 22 (MERP…RGEE) and 66 to 76 (RSKENRGDRND). Disordered stretches follow at residues 1-33 (MERP…SPVG) and 47-85 (DDCG…KKAK). Residues threonine 134 and 224–226 (HLT) contribute to the AMP site. CMP is bound by residues threonine 134 and 224–226 (HLT). Residues 299 to 353 (AELVRLSKRLVENAVLKAVQQYLEETQNKKQPGEGNSVKAEEGDRNGDGSDNNRK) form a PKA-RII-alpha subunit binding domain region. The interval 300–324 (ELVRLSKRLVENAVLKAVQQYLEET) is RI-alpha-binding. The segment at 301-314 (LVRLSKRLVENAVL) is RII-binding. Residues 321–353 (LEETQNKKQPGEGNSVKAEEGDRNGDGSDNNRK) form a disordered region. Basic and acidic residues predominate over residues 337–353 (KAEEGDRNGDGSDNNRK).

Binds cAMP-dependent protein kinase (PKA). Interacts with PRKCA; only the cytoplasmic form is capable of interacting with PRKCA. Expressed highly in the heart, and moderately in brain, lung, liver, kidney and testis. Hardly detectable in spleen and skeletal muscle. In kidney, isoform Delta is expressed in the principal cells of the IMCD.

It localises to the nucleus. The protein localises to the cytoplasm. The protein resides in the cell membrane. Functionally, probably targets cAMP-dependent protein kinase (PKA) to the cellular membrane or cytoskeletal structures. The membrane-associated form reduces epithelial sodium channel (ENaC) activity, whereas the free cytoplasmic form may negatively regulate ENaC channel feedback inhibition by intracellular sodium. Isoform Delta may be involved in shuttling aquaporin-2 (AQP2) to the plasma membrane. This is A-kinase anchor protein 7 isoforms delta and gamma from Rattus norvegicus (Rat).